Consider the following 1049-residue polypeptide: Ataxin-2-like protein (1049 aa).

The residue at position 1 (Met1) is an N-acetylmethionine. Residues 1 to 54 are disordered; sequence MLKPQPPQQTSQPQQPPPTQQAVARRSPGGTSPPNGGLPGPLTATAAPPGPPAA. Phosphoserine is present on Ser27. Thr45 carries the phosphothreonine modification. The segment at 96–119 is interaction with MPL; it reads SVRGQTTGKGPPQSPVFEGVYNNS. Residue Ser109 is modified to Phosphoserine. Tyr116 is subject to Phosphotyrosine. The Sm domain maps to 120–197; the sequence is RMLHFLTAVV…VLLVHFRNVD (78 aa). Residue Lys205 is modified to N6-acetyllysine. The residue at position 236 (Ser236) is a Phosphoserine. At Tyr262 the chain carries Phosphotyrosine. A Phosphoserine modification is found at Ser304. Tyr307 carries the post-translational modification Phosphotyrosine. A compositionally biased stretch (basic and acidic residues) spans 314-326; it reads ENDDGRTEEEKHS. Disordered regions lie at residues 314–522, 554–573, 578–704, 736–772, 824–852, 868–944, and 999–1049; these read ENDD…RNLE, QFKL…FPSR, EAKG…LTAG, VSNS…PMMQ, SNPR…AEQP, HATQ…SSFP, and PQGH…PPGN. A compositionally biased stretch (polar residues) spans 328–340; it reads VQRQGSGRESPSL. A phosphoserine mark is found at Ser333 and Ser337. A Glycyl lysine isopeptide (Lys-Gly) (interchain with G-Cter in SUMO2) cross-link involves residue Lys346. Tyr347 carries the phosphotyrosine modification. Arg359 is modified (asymmetric dimethylarginine). The span at 361–378 shows a compositional bias: low complexity; sequence GVRCSSSRGGRPGLSSLP. A phosphoserine mark is found at Ser389, Ser407, and Ser453. Residues 454–466 are compositionally biased toward low complexity; sequence PKSAAPAPVSASC. The segment covering 475–487 has biased composition (polar residues); it reads VASSASIPVTSSV. A phosphoserine mark is found at Ser496 and Ser499. Residues 508-519 are compositionally biased toward basic and acidic residues; the sequence is DVKELPTKEPSR. Phosphoserine occurs at positions 560, 561, and 562. Positions 578 to 587 are enriched in basic and acidic residues; the sequence is EAKGKEKEVD. Residue Ser597 is modified to Phosphoserine. Phosphothreonine is present on Thr635. Phosphoserine is present on residues Ser637, Ser677, Ser683, and Ser687. The span at 681-697 shows a compositional bias: low complexity; the sequence is STSTPTSPGPRTHSTPS. Composition is skewed to polar residues over residues 824 to 845 and 878 to 902; these read SNPR…STPQ and QPAT…QHQA. Residues 935 to 944 show a composition bias toward low complexity; that stretch reads SAQSPQSSFP. Polar residues predominate over residues 1033-1042; that stretch reads QVQSHPSQQL.

Belongs to the ataxin-2 family. In terms of assembly, interacts with MPL/TPOR and EPOR and dissociates after ligand stimulation. Interacts with DDX6, G3BP, and ATXN2. Interacts with PRMT1. Interacts with CIC and ATXN1. Post-translationally, thrombopoietin triggers the phosphorylation on tyrosine residues in a way that is dependent on MPL C-terminal domain. In terms of processing, asymmetrically dimethylated. Probably methylated by PRMT1. Expressed in cerebellum.

The protein localises to the membrane. Its subcellular location is the cytoplasm. It is found in the nucleus speckle. The protein resides in the cytoplasmic granule. Functionally, involved in the regulation of stress granule and P-body formation. The polypeptide is Ataxin-2-like protein (Atxn2l) (Mus musculus (Mouse)).